The primary structure comprises 363 residues: tRNA N6-adenosine threonylcarbamoyltransferase (363 aa).

H121 and H125 together coordinate Fe cation. Residues 143 to 147 (LASGG), D176, G189, and N287 contribute to the substrate site. D315 is a Fe cation binding site.

It belongs to the KAE1 / TsaD family. The cofactor is Fe(2+).

The protein localises to the cytoplasm. The catalysed reaction is L-threonylcarbamoyladenylate + adenosine(37) in tRNA = N(6)-L-threonylcarbamoyladenosine(37) in tRNA + AMP + H(+). Its function is as follows. Required for the formation of a threonylcarbamoyl group on adenosine at position 37 (t(6)A37) in tRNAs that read codons beginning with adenine. Is involved in the transfer of the threonylcarbamoyl moiety of threonylcarbamoyl-AMP (TC-AMP) to the N6 group of A37, together with TsaE and TsaB. TsaD likely plays a direct catalytic role in this reaction. This is tRNA N6-adenosine threonylcarbamoyltransferase from Rhodopseudomonas palustris (strain TIE-1).